A 221-amino-acid polypeptide reads, in one-letter code: Adenylate kinase (221 aa).

10–15 is a binding site for ATP; sequence GAGKGT. Positions 30–59 are NMP; that stretch reads STGDMLRAAVKAGTPLGLEAKRYMDAGELV. Residues T31, R36, 57–59, 85–88, and Q92 contribute to the AMP site; these read ELV and GFPR. Positions 122–159 are LID; the sequence is GRRMHPASGRTYHVKFNPPKVEGVDDVTGEPLIQRDDD. Residues R123 and 132–133 each bind ATP; that span reads TY. R156 and R167 together coordinate AMP. G207 contacts ATP.

It belongs to the adenylate kinase family. Monomer.

The protein resides in the cytoplasm. It catalyses the reaction AMP + ATP = 2 ADP. The protein operates within purine metabolism; AMP biosynthesis via salvage pathway; AMP from ADP: step 1/1. In terms of biological role, catalyzes the reversible transfer of the terminal phosphate group between ATP and AMP. Plays an important role in cellular energy homeostasis and in adenine nucleotide metabolism. This chain is Adenylate kinase, found in Paraburkholderia phymatum (strain DSM 17167 / CIP 108236 / LMG 21445 / STM815) (Burkholderia phymatum).